The primary structure comprises 355 residues: Peptide chain release factor 1 (355 aa).

An N5-methylglutamine modification is found at Q233.

The protein belongs to the prokaryotic/mitochondrial release factor family. Post-translationally, methylated by PrmC. Methylation increases the termination efficiency of RF1.

Its subcellular location is the cytoplasm. Its function is as follows. Peptide chain release factor 1 directs the termination of translation in response to the peptide chain termination codons UAG and UAA. This chain is Peptide chain release factor 1, found in Desulforudis audaxviator (strain MP104C).